The following is a 298-amino-acid chain: Ribose-phosphate pyrophosphokinase (298 aa).

Residues 33 to 35 and 91 to 92 each bind ATP; these read DGE and RQ. Residues histidine 125 and aspartate 164 each contribute to the Mg(2+) site. Lysine 187 is an active-site residue. D-ribose 5-phosphate-binding residues include arginine 189 and aspartate 224.

This sequence belongs to the ribose-phosphate pyrophosphokinase family. Class III (archaeal) subfamily. It depends on Mg(2+) as a cofactor.

It localises to the cytoplasm. The catalysed reaction is D-ribose 5-phosphate + ATP = 5-phospho-alpha-D-ribose 1-diphosphate + AMP + H(+). Its pathway is metabolic intermediate biosynthesis; 5-phospho-alpha-D-ribose 1-diphosphate biosynthesis; 5-phospho-alpha-D-ribose 1-diphosphate from D-ribose 5-phosphate (route I): step 1/1. In terms of biological role, involved in the biosynthesis of the central metabolite phospho-alpha-D-ribosyl-1-pyrophosphate (PRPP) via the transfer of pyrophosphoryl group from ATP to 1-hydroxyl of ribose-5-phosphate (Rib-5-P). This Methanobrevibacter smithii (strain ATCC 35061 / DSM 861 / OCM 144 / PS) protein is Ribose-phosphate pyrophosphokinase.